The primary structure comprises 468 residues: UDP-N-acetylmuramate--L-alanine ligase (468 aa).

Residue 114-120 (GTHGKTT) participates in ATP binding.

The protein belongs to the MurCDEF family.

The protein localises to the cytoplasm. It carries out the reaction UDP-N-acetyl-alpha-D-muramate + L-alanine + ATP = UDP-N-acetyl-alpha-D-muramoyl-L-alanine + ADP + phosphate + H(+). Its pathway is cell wall biogenesis; peptidoglycan biosynthesis. Its function is as follows. Cell wall formation. This chain is UDP-N-acetylmuramate--L-alanine ligase, found in Methylorubrum populi (strain ATCC BAA-705 / NCIMB 13946 / BJ001) (Methylobacterium populi).